We begin with the raw amino-acid sequence, 301 residues long: Polynucleotide kinase (301 aa).

Homotetramer. The cofactor is Mg(2+).

The catalysed reaction is a 5'-end dephospho-2'-deoxyribonucleoside-DNA + ATP = a 5'-end 5'-phospho-2'-deoxyribonucleoside-DNA + ADP + H(+). It carries out the reaction a 2'-deoxyribonucleoside 3'-phosphate + H2O = a 2'-deoxyribonucleoside + phosphate. Acts as a 5'-hydroxyl kinase, a 3'-phosphatase and a 2',3'-cyclic phosphodiesterase. Catalyzes the transfer of the terminal phosphate of ATP to the 5'-hydroxyl termini of ribo- and deoxyribonucleotides. In the presence of ADP the enzyme also catalyzes an exchange reaction. In the exchange reaction, an excess ADP causes the enzyme to transfer the 5' terminal phosphate from phosphorylated DNA to ADP. Involved in countering a host defense mechanism which activates T4-induced anticodon nuclease and shuts off viral translation. The polynucleotide kinase modifies the ends of nicked tRNA generated by the antiviral response of the host bacteria and facilitates repair by T4 RNA ligase. In Escherichia coli (Bacteriophage T4), this protein is Polynucleotide kinase (pseT).